The primary structure comprises 100 residues: Urease subunit gamma (100 aa).

It belongs to the urease gamma subunit family. In terms of assembly, heterotrimer of UreA (gamma), UreB (beta) and UreC (alpha) subunits. Three heterotrimers associate to form the active enzyme.

It is found in the cytoplasm. It carries out the reaction urea + 2 H2O + H(+) = hydrogencarbonate + 2 NH4(+). It participates in nitrogen metabolism; urea degradation; CO(2) and NH(3) from urea (urease route): step 1/1. The chain is Urease subunit gamma from Frankia alni (strain DSM 45986 / CECT 9034 / ACN14a).